Consider the following 285-residue polypeptide: Transmembrane protein 53-B (285 aa).

Residues 165–185 traverse the membrane as a helical segment; the sequence is FLALAAFAIMVIILRIVLYPV.

It belongs to the TMEM53 family.

It is found in the nucleus outer membrane. Its function is as follows. Ensures normal bone formation, through the negative regulation of bone morphogenetic protein (BMP) signaling in osteoblast lineage cells by blocking cytoplasm-nucleus translocation of phosphorylated SMAD proteins. The protein is Transmembrane protein 53-B (tmem53-b) of Xenopus laevis (African clawed frog).